Reading from the N-terminus, the 97-residue chain is Antitoxin TacA2 (97 aa).

The protein belongs to the TacA antitoxin family. In terms of assembly, homodimer. Forms a complex with cognate toxin TacT2.

Functionally, antitoxin component of a type II toxin-antitoxin (TA) system. Counteracts the toxic effect of cognate toxin TacT2. The TacA2-TacT2 complex both represses and derepresses expression of its own operon. The sequence is that of Antitoxin TacA2 from Salmonella enteritidis.